The primary structure comprises 133 residues: Small ribosomal subunit protein uS8 (133 aa).

This sequence belongs to the universal ribosomal protein uS8 family. In terms of assembly, part of the 30S ribosomal subunit. Contacts proteins S5 and S12.

In terms of biological role, one of the primary rRNA binding proteins, it binds directly to 16S rRNA central domain where it helps coordinate assembly of the platform of the 30S subunit. The sequence is that of Small ribosomal subunit protein uS8 from Acaryochloris marina (strain MBIC 11017).